Reading from the N-terminus, the 612-residue chain is Rhamnogalacturonan exolyase YesX (612 aa).

Residue Asn119 participates in substrate binding. 6 residues coordinate Ca(2+): Asp120, Asp125, Asp127, Asp129, Glu131, and Glu133. Positions 139, 154, and 174 each coordinate substrate. 5 residues coordinate Ca(2+): Asp189, Asp191, Asp193, Lys195, and Glu197. Substrate contacts are provided by Gly205 and Arg222. Ca(2+) is bound by residues His330, Asp336, Asp338, Asp340, Lys342, Glu344, Asp353, His354, His366, Asp368, Asp374, Asp376, Arg379, Gly381, Glu383, and Glu389. Arg419 provides a ligand contact to substrate. Positions 472, 474, 476, and 478 each coordinate Ca(2+). A substrate-binding site is contributed by Asn516–Thr518. Ca(2+) contacts are provided by Asn527, Phe529, Asp531, Arg533, Glu535, Asn576, and Ala578. Tyr579 contributes to the substrate binding site. Asn580 provides a ligand contact to Ca(2+).

Belongs to the polysaccharide lyase 11 family. As to quaternary structure, monomer. Mn(2+) serves as cofactor. It depends on Zn(2+) as a cofactor. Co(2+) is required as a cofactor. The cofactor is Ca(2+).

It is found in the secreted. It carries out the reaction Exotype eliminative cleavage of alpha-L-rhamnopyranosyl-(1-&gt;4)-alpha-D-galactopyranosyluronic acid bonds of rhamnogalacturonan I oligosaccharides containing alpha-L-rhamnopyranose at the reducing end and 4-deoxy-4,5-unsaturated D-galactopyranosyluronic acid at the non-reducing end. The products are the disaccharide 2-O-(4-deoxy-beta-L-threo-hex-4-enopyranuronosyl)-alpha-L-rhamnopyranose and the shortened rhamnogalacturonan oligosaccharide containing one 4-deoxy-4,5-unsaturated D-galactopyranosyluronic acid at the non-reducing end.. In terms of biological role, pectinolytic enzyme that degrades type I rhamnogalacturonan from plant cell walls and releases disaccharide products. Degrades rhamnogalacturonan, polygalacturonic acid and pectic acid. Has very low activity on pectin. The sequence is that of Rhamnogalacturonan exolyase YesX (yesX) from Bacillus subtilis (strain 168).